We begin with the raw amino-acid sequence, 247 residues long: Pyridoxine 5'-phosphate synthase (247 aa).

3-amino-2-oxopropyl phosphate is bound at residue asparagine 9. 11–12 (DH) serves as a coordination point for 1-deoxy-D-xylulose 5-phosphate. Arginine 20 contributes to the 3-amino-2-oxopropyl phosphate binding site. The active-site Proton acceptor is the histidine 45. Residues arginine 47 and histidine 52 each coordinate 1-deoxy-D-xylulose 5-phosphate. The active-site Proton acceptor is the glutamate 72. Position 102 (threonine 102) interacts with 1-deoxy-D-xylulose 5-phosphate. Catalysis depends on histidine 193, which acts as the Proton donor. 3-amino-2-oxopropyl phosphate is bound by residues glycine 194 and 215–216 (GH).

The protein belongs to the PNP synthase family. In terms of assembly, homooctamer; tetramer of dimers.

The protein resides in the cytoplasm. It catalyses the reaction 3-amino-2-oxopropyl phosphate + 1-deoxy-D-xylulose 5-phosphate = pyridoxine 5'-phosphate + phosphate + 2 H2O + H(+). The protein operates within cofactor biosynthesis; pyridoxine 5'-phosphate biosynthesis; pyridoxine 5'-phosphate from D-erythrose 4-phosphate: step 5/5. Catalyzes the complicated ring closure reaction between the two acyclic compounds 1-deoxy-D-xylulose-5-phosphate (DXP) and 3-amino-2-oxopropyl phosphate (1-amino-acetone-3-phosphate or AAP) to form pyridoxine 5'-phosphate (PNP) and inorganic phosphate. The protein is Pyridoxine 5'-phosphate synthase of Blochmanniella floridana.